Reading from the N-terminus, the 877-residue chain is Probable alpha/beta-glucosidase agdC (877 aa).

The N-terminal stretch at 1-14 (MLGSLLLLAPLAGA) is a signal peptide. N-linked (GlcNAc...) asparagine glycans are attached at residues Asn171, Asn293, and Asn373. Catalysis depends on Asp422, which acts as the Nucleophile. Glu425 is a catalytic residue. Residues 432-476 (DPCTDPERYSSENNLPPAPPPVRSSSPRPLPGFPADFQPSSASRS) are disordered. Over residues 447-463 (PPAPPPVRSSSPRPLPG) the composition is skewed to pro residues. The N-linked (GlcNAc...) asparagine glycan is linked to Asn508. The active-site Proton donor is the Asp573. Asn574, Asn610, and Asn744 each carry an N-linked (GlcNAc...) asparagine glycan.

This sequence belongs to the glycosyl hydrolase 31 family.

It is found in the secreted. It catalyses the reaction Hydrolysis of terminal, non-reducing (1-&gt;4)-linked alpha-D-glucose residues with release of alpha-D-glucose.. It carries out the reaction Hydrolysis of terminal, non-reducing beta-D-glucosyl residues with release of beta-D-glucose.. Its function is as follows. Glucosidase involved in the degradation of cellulosic biomass. Has both alpha- and beta-glucosidase activity. This is Probable alpha/beta-glucosidase agdC (agdC) from Aspergillus flavus (strain ATCC 200026 / FGSC A1120 / IAM 13836 / NRRL 3357 / JCM 12722 / SRRC 167).